The chain runs to 270 residues: Probable feruloyl esterase C (270 aa).

Positions 1–22 (MAILSRLLTTVTLGSLLTSAVA) are cleaved as a signal peptide.

The protein belongs to the faeC family.

The protein localises to the secreted. It carries out the reaction feruloyl-polysaccharide + H2O = ferulate + polysaccharide.. In terms of biological role, involved in degradation of plant cell walls. Hydrolyzes the feruloyl-arabinose ester bond in arabinoxylans, and the feruloyl-galactose ester bond in pectin. Active against paranitrophenyl-acetate, methyl ferulate and wheat arabinoxylan. The polypeptide is Probable feruloyl esterase C (faeC) (Aspergillus terreus (strain NIH 2624 / FGSC A1156)).